The chain runs to 152 residues: Transcriptional regulator MraZ (152 aa).

SpoVT-AbrB domains lie at 5–52 (ATLV…PLPE) and 81–124 (ASEC…DETT).

This sequence belongs to the MraZ family. Forms oligomers.

The protein localises to the cytoplasm. It is found in the nucleoid. Negatively regulates its own expression and that of the subsequent genes in the proximal part of the division and cell wall (dcw) gene cluster. Acts by binding directly to DNA. May also regulate the expression of genes outside the dcw cluster. The sequence is that of Transcriptional regulator MraZ from Shigella flexneri serotype 5b (strain 8401).